The sequence spans 275 residues: MNTKEIVNKYEFKFNKNLGQNFLIDESVLEDIIEGAEISKEDTVIEIGPGVGTLTKELLERAKEVYSIELDGDLIPILQEELKEYNNFTLIHKDALKIDFNELMENKESIKLVANLPYYVTTPIISRLLTEKCDFKSLTIMIQKEVAERINAEPNCKEYGSLTVLVQYYCNTKIIRKVSPNSFIPRPKVDSIVIKLDRLSEPRVRVKSQKLFFNVVRSSFNMRRKTLWNSLKSLNIDKESMENAFERAGIDPKRRGETLSIEEFGKLSDCIYDIL.

6 residues coordinate S-adenosyl-L-methionine: N21, L23, G48, E69, D94, and N115.

This sequence belongs to the class I-like SAM-binding methyltransferase superfamily. rRNA adenine N(6)-methyltransferase family. RsmA subfamily.

It localises to the cytoplasm. It catalyses the reaction adenosine(1518)/adenosine(1519) in 16S rRNA + 4 S-adenosyl-L-methionine = N(6)-dimethyladenosine(1518)/N(6)-dimethyladenosine(1519) in 16S rRNA + 4 S-adenosyl-L-homocysteine + 4 H(+). In terms of biological role, specifically dimethylates two adjacent adenosines (A1518 and A1519) in the loop of a conserved hairpin near the 3'-end of 16S rRNA in the 30S particle. May play a critical role in biogenesis of 30S subunits. The protein is Ribosomal RNA small subunit methyltransferase A of Clostridium botulinum (strain Langeland / NCTC 10281 / Type F).